We begin with the raw amino-acid sequence, 82 residues long: Immediate early response 3-interacting protein 1 (82 aa).

2 helical membrane passes run 2–22 (AFTL…VAVL) and 62–82 (VMRV…LLFG).

This sequence belongs to the YOS1 family.

The protein resides in the endoplasmic reticulum membrane. Functionally, regulator of endoplasmic reticulum secretion that acts as a key determinant of brain size. Required for secretion of extracellular matrix proteins. Required for correct brain development by depositing sufficient extracellular matrix proteins for tissue integrity and the proliferation of neural progenitors. Acts as a regulator of the unfolded protein response (UPR). This Xenopus laevis (African clawed frog) protein is Immediate early response 3-interacting protein 1.